We begin with the raw amino-acid sequence, 153 residues long: UPF0158 protein PA5073 (153 aa).

It belongs to the UPF0158 family.

The sequence is that of UPF0158 protein PA5073 from Pseudomonas aeruginosa (strain ATCC 15692 / DSM 22644 / CIP 104116 / JCM 14847 / LMG 12228 / 1C / PRS 101 / PAO1).